Here is a 685-residue protein sequence, read N- to C-terminus: MSTPASAAPAALVRVPAGTTAGTAVREAGYPSKGPDVVVVVRDAEGQLKDLSWVPDTDVEVEPVAANTDDGRSVIRHSAAHVLAQAVQQEFPEAKLGIGPPIKDGFYYDFAVDRPFTPEDLASLEKRMKKIIKGSQRFSRRVVESLEDARAELAKEPFKLELIDDKSGIDDPEIMEVGGNELTIYDNLDPRTGEKVWGDLCRGPHIPTTKHIPAFKLTRSSAAYWRGNQDNADLQRIYGTAWESAEAQDQHLELLAEAERRDHRKLGSELDLFSFPDELGSGLPVFHPRGGIIRTEMEDYSRKRHVEEGYEFVNTPHITKGHLYEVSGHLDWYRDGMFPAMHIDEELNEDGTVRKPGQDYYLKPMNCPMHNLIFRSRGRSYRELPLRLFEFGSVYRYEKSGVVHGLTRVRGMTQDDAHIYCTREQMRDELATTLQFVLGLLKDYGLDDFYLELSTKNPDKFVGDDAVWEEATATLAEVAESSGLNLVPDPGGAAFYGPKISVQVQDALGRTWQMSTIQLDFNLPERFDLEYTANDGTKQRPVMIHRALFGSIERFFGVLTEHYAGAFPAWLAPVQVVGIPVAETFADHLFDVVKRLKAAGVRAEVDASDDRMQKKIFNNTAQKVPFMLLAGARDVEAGAVSFRFRDGTQVNGVPVDDAVRIVTEWIGRRENASPTAELLQPGKEG.

One can recognise a TGS domain in the interval 1 to 65 (MSTPASAAPA…DTDVEVEPVA (65 aa)). The tract at residues 262–568 (DHRKLGSELD…LTEHYAGAFP (307 aa)) is catalytic. Positions 367, 418, and 545 each coordinate Zn(2+).

Belongs to the class-II aminoacyl-tRNA synthetase family. As to quaternary structure, homodimer. Requires Zn(2+) as cofactor.

The protein localises to the cytoplasm. It carries out the reaction tRNA(Thr) + L-threonine + ATP = L-threonyl-tRNA(Thr) + AMP + diphosphate + H(+). Its function is as follows. Catalyzes the attachment of threonine to tRNA(Thr) in a two-step reaction: L-threonine is first activated by ATP to form Thr-AMP and then transferred to the acceptor end of tRNA(Thr). Also edits incorrectly charged L-seryl-tRNA(Thr). This Rhodococcus jostii (strain RHA1) protein is Threonine--tRNA ligase.